The following is a 370-amino-acid chain: Chaperone protein DnaJ (370 aa).

One can recognise a J domain in the interval 6–70 (DYYEVLGVQR…EKRSMYDRFG (65 aa)). Residues 128–208 (GVEKTIEFRR…CRGEGRVRQT (81 aa)) form a CR-type zinc finger. Zn(2+) is bound by residues Cys-141, Cys-144, Cys-158, Cys-161, Cys-182, Cys-185, Cys-196, and Cys-199. CXXCXGXG motif repeat units follow at residues 141-148 (CPACRGSG), 158-165 (CPKCGGLG), 182-189 (CDMCRGEG), and 196-203 (CRECRGEG).

It belongs to the DnaJ family. As to quaternary structure, homodimer. Zn(2+) serves as cofactor.

It is found in the cytoplasm. Its function is as follows. Participates actively in the response to hyperosmotic and heat shock by preventing the aggregation of stress-denatured proteins and by disaggregating proteins, also in an autonomous, DnaK-independent fashion. Unfolded proteins bind initially to DnaJ; upon interaction with the DnaJ-bound protein, DnaK hydrolyzes its bound ATP, resulting in the formation of a stable complex. GrpE releases ADP from DnaK; ATP binding to DnaK triggers the release of the substrate protein, thus completing the reaction cycle. Several rounds of ATP-dependent interactions between DnaJ, DnaK and GrpE are required for fully efficient folding. Also involved, together with DnaK and GrpE, in the DNA replication of plasmids through activation of initiation proteins. In Roseiflexus sp. (strain RS-1), this protein is Chaperone protein DnaJ.